The following is a 218-amino-acid chain: uncharacterized protein (218 aa).

5 helical membrane passes run 19 to 39, 92 to 112, 124 to 144, 161 to 181, and 196 to 216; these read VFGF…FTII, FDYA…VSAV, YGLI…MILA, LLFE…IAPF, and YILM…EILL.

It is found in the cell membrane. This is an uncharacterized protein from Methanocaldococcus jannaschii (strain ATCC 43067 / DSM 2661 / JAL-1 / JCM 10045 / NBRC 100440) (Methanococcus jannaschii).